We begin with the raw amino-acid sequence, 198 residues long: Neutrophil gelatinase-associated lipocalin (198 aa).

The N-terminal stretch at 1–20 (MPLGLLWLGLALLGALHAQA) is a signal peptide. The residue at position 21 (Gln21) is a Pyrrolidone carboxylic acid. Residue 72–74 (YAT) coordinates a carboxymycobactin. The N-linked (GlcNAc...) asparagine glycan is linked to Asn85. Cys96 and Cys195 are joined by a disulfide. An enterobactin-binding site is contributed by Tyr126. Residues Lys145, Lys154, and Tyr158 each contribute to the a carboxymycobactin site. Lys154 serves as a coordination point for enterobactin.

This sequence belongs to the calycin superfamily. Lipocalin family. As to quaternary structure, monomer. Homodimer; disulfide-linked. Heterodimer; disulfide-linked with MMP9. In terms of tissue distribution, detected in neutrophils (at protein level). Expressed in bone marrow and in tissues that are prone to exposure to microorganism. High expression is found in bone marrow as well as in uterus, prostate, salivary gland, stomach, appendix, colon, trachea and lung. Expressed in the medullary tubules of the kidney. Not found in the small intestine or peripheral blood leukocytes.

Its subcellular location is the secreted. The protein resides in the cytoplasmic granule lumen. It localises to the cytoplasmic vesicle lumen. Functionally, iron-trafficking protein involved in multiple processes such as apoptosis, innate immunity and renal development. Binds iron through association with 2,3-dihydroxybenzoic acid (2,3-DHBA), a siderophore that shares structural similarities with bacterial enterobactin, and delivers or removes iron from the cell, depending on the context. Iron-bound form (holo-24p3) is internalized following binding to the SLC22A17 (24p3R) receptor, leading to release of iron and subsequent increase of intracellular iron concentration. In contrast, association of the iron-free form (apo-24p3) with the SLC22A17 (24p3R) receptor is followed by association with an intracellular siderophore, iron chelation and iron transfer to the extracellular medium, thereby reducing intracellular iron concentration. Involved in apoptosis due to interleukin-3 (IL3) deprivation: iron-loaded form increases intracellular iron concentration without promoting apoptosis, while iron-free form decreases intracellular iron levels, inducing expression of the proapoptotic protein BCL2L11/BIM, resulting in apoptosis. Involved in innate immunity; limits bacterial proliferation by sequestering iron bound to microbial siderophores, such as enterobactin. Can also bind siderophores from M.tuberculosis. The polypeptide is Neutrophil gelatinase-associated lipocalin (LCN2) (Homo sapiens (Human)).